Consider the following 1893-residue polypeptide: CDK5 regulatory subunit-associated protein 2 (1893 aa).

A CM1 motif; interacts with the gTuRC region spans residues 51–94 (TVSPTRARNMKDFENQITELKKENFNLKLRIYFLEERMQQEFHG). Residues 58–196 (RNMKDFENQI…TEKALRLRLE (139 aa)) are interaction with NCKAP5L. Residue Ser-547 is modified to Phosphoserine. The segment at 926–1208 (PGVTNREAKK…LENLKQQLEE (283 aa)) is interaction with MAPRE1. Phosphothreonine is present on Thr-1001. The tract at residues 1015 to 1071 (AAYQDSPGEQKGIKTTSSVWRDKEMDSDQQTSYEIDSEICPPDDLASLPSCKENPED) is disordered. Positions 1196-1893 (SRVLENLKQQ…GTCSPSRPGS (698 aa)) are interaction with PCNT and AKAP9. Residue Ser-1238 is modified to Phosphoserine. Disordered regions lie at residues 1347–1381 (LPES…NETE) and 1467–1486 (IKGS…SLSR). Positions 1469–1486 (GSRDKQKENDKLRESLSR) are enriched in basic and acidic residues. Ser-1490 is subject to Phosphoserine. Basic and acidic residues predominate over residues 1500–1519 (SVKEENERLQKEGSEKERHN). Residues 1500-1521 (SVKEENERLQKEGSEKERHNQQ) form a disordered region. Residues Ser-1663 and Ser-1666 each carry the phosphoserine modification. Disordered regions lie at residues 1675 to 1706 (AVTP…ATST) and 1752 to 1774 (DVQT…PHPA). Positions 1726–1768 (HVLGLIEDYEALLKQISQGQRLLAEMDVQTQEAPSSTSQELGT) are interaction with CDK5R1. A compositionally biased stretch (polar residues) spans 1753-1766 (VQTQEAPSSTSQEL). The tract at residues 1861–1870 (VVTHKILRKA) is required for centrosomal attachment, Golgi localization and CALM1 interaction. The tract at residues 1874-1893 (LELRPGGSHPGTCSPSRPGS) is disordered. Polar residues predominate over residues 1884-1893 (GTCSPSRPGS). Ser-1893 is modified (phosphoserine).

Homodimer. Interacts with CDK5R1 (p35 form). CDK5RAP1, CDK5RAP2 and CDK5RAP3 show competitive binding to CDK5R1. May form a complex with CDK5R1 and CDK5. Interacts with pericentrin/PCNT; the interaction is leading to centrosomal and Golgi localization of CDK5RAP2 and PCNT. Interacts with AKAP9; the interaction targets CDK5RAP2 and AKAP9 to Golgi apparatus. Interacts with MAPRE1; the interaction is direct and targets CDK5RAP2 and EB1/MAPRE1 to microtubule plus ends. Interacts with TUBG1; the interaction is leading to the centrosomal localization of CDK5RAP2 and TUBG1. Interacts with TUBGCP3. Interacts with CALM1. Interacts with CDC20. Interacts with CEP68; degradation of CEP68 in early mitosis leads to removal of CDK5RAP2 from the centrosome which promotes centriole disengagement and subsequent centriole separation. Interacts with NCKAP5L. Forms a pericentrosomal complex with AKAP9, MAPRE1 and PDE4DIP isoform 13/MMG8/SMYLE; within this complex, MAPRE1 binding to CDK5RAP2 may be mediated by PDE4DIP. Interacts with LGALS3BP; this interaction may connect the pericentrosomal complex to the gamma-tubulin ring complex (gTuRC) to promote microtubule assembly and acetylation. Interacts with CCDC66. Associates (via CM1 motif) with TUBGCP2 of the gTuRC; the interaction plays a role in gTuRC activation. In terms of processing, phosphorylated in vitro by CDK5.

It is found in the cytoplasm. Its subcellular location is the cytoskeleton. The protein resides in the microtubule organizing center. The protein localises to the centrosome. It localises to the golgi apparatus. Its function is as follows. Potential regulator of CDK5 activity via its interaction with CDK5R1. Negative regulator of centriole disengagement (licensing) which maintains centriole engagement and cohesion. Involved in regulation of mitotic spindle orientation. Plays a role in the spindle checkpoint activation by acting as a transcriptional regulator of both BUBR1 and MAD2 promoter. Together with EB1/MAPRE1, may promote microtubule polymerization, bundle formation, growth and dynamics at the plus ends. Regulates centrosomal maturation by recruitment of the gamma-tubulin ring complex (gTuRC) onto centrosomes. In complex with PDE4DIP isoform 13/MMG8/SMYLE, MAPRE1 and AKAP9, contributes to microtubules nucleation and extension from the centrosome to the cell periphery. Required for the recruitment of AKAP9 to centrosomes. Plays a role in neurogenesis. The polypeptide is CDK5 regulatory subunit-associated protein 2 (CDK5RAP2) (Pan troglodytes (Chimpanzee)).